Reading from the N-terminus, the 105-residue chain is Large ribosomal subunit protein uL24 (105 aa).

It belongs to the universal ribosomal protein uL24 family. Part of the 50S ribosomal subunit.

Functionally, one of two assembly initiator proteins, it binds directly to the 5'-end of the 23S rRNA, where it nucleates assembly of the 50S subunit. In terms of biological role, one of the proteins that surrounds the polypeptide exit tunnel on the outside of the subunit. This chain is Large ribosomal subunit protein uL24, found in Nitrosospira multiformis (strain ATCC 25196 / NCIMB 11849 / C 71).